Consider the following 278-residue polypeptide: Neuronal membrane glycoprotein M6-a (278 aa).

An N-acetylmethionine modification is found at M1. Residues 1–22 (MEENMEEGQTQKGCFECCIKCL) lie on the Cytoplasmic side of the membrane. The chain crosses the membrane as a helical span at residues 23 to 43 (GGIPYASLIATILLYAGVALF). The Extracellular segment spans residues 44–84 (CGCGHEALSGTVNILQTYFELARTAGDTLDVFTMIDIFKYV). Residues 85-105 (IYGIAAAFFVYGILLMVEGFF) form a helical membrane-spanning segment. The Cytoplasmic portion of the chain corresponds to 106-127 (TTGAIKDLYGDFKITTCGRCVS). A helical membrane pass occupies residues 128-148 (AWFIMLTYLFMLAWLGVTAFT). Over 149 to 213 (SLPVYMYFNV…STELNMTFHL (65 aa)) the chain is Extracellular. N-linked (GlcNAc...) asparagine glycosylation is present at N164. A disulfide bridge connects residues C174 and C192. Residue N208 is glycosylated (N-linked (GlcNAc...) asparagine). Residues 214–234 (FIVALAGAGAAVIAMVHYLMV) form a helical membrane-spanning segment. The Cytoplasmic segment spans residues 235 to 278 (LSANWAYVKDACRMQKYEDIKSKEEQELHDIHSTRSKERLNAYT). S256 is subject to Phosphoserine. The residue at position 278 (T278) is a Phosphothreonine.

Belongs to the myelin proteolipid protein family. As to quaternary structure, interacts with OPRM1. Interacts with palmitoyltransferase ZDHHC17/HIP14; the interaction leads to palmitoylation of GPM6A. Post-translationally, N-glycosylated. Palmitoylated by ZDHHC17/HIP14. Widely expressed in the CNS. Found especially in the granule cell layer of the cerebellum but not in the molecular layer or white matter. Expressed in the immature embryonic retina including the nerve fiber layer (NFL), inner plexiform layer (IPL), and outer plexiform layer (OPL). Weakly expressed in processes of Mueller glia cells.

The protein localises to the cell membrane. The protein resides in the cell projection. Its subcellular location is the axon. It is found in the growth cone. It localises to the dendritic spine. The protein localises to the filopodium. The protein resides in the neuron projection. Its function is as follows. Involved in neuronal differentiation, including differentiation and migration of neuronal stem cells. Plays a role in neuronal plasticity and is involved in neurite and filopodia outgrowth, filopodia motility and probably synapse formation. Gpm6a-induced filopodia formation involves mitogen-activated protein kinase (MAPK) and Src signaling pathways. Conflictingly, PubMed:22162747 reports that induced cellular protrusions are simple membrane-wrapped tubules without actin or tubulin-based cytoskeletons and with Gpm6a gliding along membrane edges indicative for a function in actin-independent membrane deformation. May be involved in neuronal NGF-dependent Ca(2+) influx. May be involved in regulation of endocytosis and intracellular trafficking of G-protein-coupled receptors (GPCRs); enhances internalization and recycling of mu-type opioid receptor. The protein is Neuronal membrane glycoprotein M6-a (Gpm6a) of Mus musculus (Mouse).